The primary structure comprises 1617 residues: Mitogen-activated protein kinase kinae kinase bck1 (1617 aa).

Disordered stretches follow at residues 1–73 (MDGQ…SQLQ), 167–199 (GPVHHLYESSGGDGSAYKRDGTVPPTPSARTMP), 211–253 (SVAS…GGMS), 345–399 (RQIH…SPNL), 455–555 (DHRR…SSSY), 568–633 (KRSK…LRGK), 739–820 (GVPL…ISPE), 832–1144 (EHKR…RGDI), and 1164–1277 (DIDL…EILR). Over residues 19–28 (TQPSQSHMLS) the composition is skewed to low complexity. Positions 44 to 60 (VMPPPPPGPPPGPPPGP) are enriched in pro residues. Residues 220 to 248 (TAQNHQSQTGQTNEPTKSPSHRQNNSNTL) are compositionally biased toward polar residues. Over residues 482-504 (KSGSPATQHATLNQGLSSSSTGD) the composition is skewed to polar residues. Residues 524-533 (RYYESRKGQE) show a composition bias toward basic and acidic residues. 2 stretches are compositionally biased toward polar residues: residues 535 to 555 (IRPSPQEMCSRQWTGETSSSY) and 586 to 596 (ESPTSPVNLRQ). 2 stretches are compositionally biased toward basic and acidic residues: residues 832–841 (EHKREVERKQ) and 871–885 (FDERRVSPYEDKKAD). 2 stretches are compositionally biased toward polar residues: residues 897–907 (PQESYTLTRIN) and 956–980 (GGKQTNFGSFGSPTQGNTKSAPQSS). Basic and acidic residues-rich tracts occupy residues 1128-1140 (EDERPPPRRDSFA) and 1189-1198 (PENDLHKKEN). 2 stretches are compositionally biased toward polar residues: residues 1199-1208 (QPSSSYTGEM) and 1257-1272 (NQASRSRSIHTGNQKS). Residues 1323–1596 (IIRGQLIGKG…QTLLTRHPFC (274 aa)) enclose the Protein kinase domain. ATP-binding positions include 1329 to 1337 (IGKGTYGRV) and K1352. Residue D1453 is the Proton acceptor of the active site.

It belongs to the protein kinase superfamily. STE Ser/Thr protein kinase family. MAP kinase kinase subfamily.

It carries out the reaction L-seryl-[protein] + ATP = O-phospho-L-seryl-[protein] + ADP + H(+). The enzyme catalyses L-threonyl-[protein] + ATP = O-phospho-L-threonyl-[protein] + ADP + H(+). Mitogen-activated kinase kinase kinase (MAPKKK), part of the cell wall integrity (CWI) signaling pathway composed by three protein kinases bck1, mkk2 and mpkA and responsible for the maintaining of cell-wall integrity balance. The CWI pathway also regulates the oxidative stress response, as well as the production of some secondary metabolites including pyomelanin. The protein is Mitogen-activated protein kinase kinae kinase bck1 of Aspergillus fumigatus (strain CBS 144.89 / FGSC A1163 / CEA10) (Neosartorya fumigata).